We begin with the raw amino-acid sequence, 458 residues long: Gamma aminobutyrate transaminase 2 (458 aa).

Position 114-115 (114-115 (GS)) interacts with pyridoxal 5'-phosphate. Residue Y147 participates in substrate binding. Pyridoxal 5'-phosphate is bound at residue D254. K283 is a binding site for substrate. K283 bears the N6-(pyridoxal phosphate)lysine mark.

The protein belongs to the class-III pyridoxal-phosphate-dependent aminotransferase family. Expressed in leaves, roots, stems, flowers and fruits. Expressed in carpels, but not in stamens.

The protein resides in the cytoplasm. The enzyme catalyses 4-aminobutanoate + pyruvate = succinate semialdehyde + L-alanine. It carries out the reaction 4-aminobutanoate + glyoxylate = succinate semialdehyde + glycine. Functionally, transaminase that degrades gamma-amino butyric acid (GABA) and uses pyruvate or glyoxylate as amino-group acceptor. Cannot use beta-alanine, ornithine, acetylornithine, serine, glycine, asparagine, glutamine, glutamate, valine, leucine, isoleucine, methionine, phenylalanine, histidine, lysine, arginine, aspartate, threonine, tyrosine, tryptophan, proline, or cysteine as amino donors. May be responsible for establishing the GABA gradient in the carpel. The sequence is that of Gamma aminobutyrate transaminase 2 (GABA-TP2) from Solanum lycopersicum (Tomato).